The sequence spans 660 residues: MKIIYQEQPNECGICVLGMLANELHEDKYAHDELLEQINLPASGLSFFELETYGKKFGLEIASYQLTLEELKQLEGKYFIVHFPKHFVVVHKKQDNLWEVFDPAKGKYLLNDEELKKQWTGYAATVQKSFKEIPPINKRNFFKHFFDLNLIIFYVFIELIIIGISTLLATASKTMIANTVDFGTSVNIVVFVVFFLVLKGLYLLLYALLQMVRNVLFWKQYRGYLGWIMQTLQTKSFVYFSNKSPNQLTERQFYLKEVLSFFNVHIPNLIISCTVALIIGTLIGINQMEFLWIAIVQIVVNCAIFLYDFFFTKRITKQAIPQMELQNKVSLQLDGNLRDEQNGKRFNYLMMQLRKALIKNQNISNQKEVNHLASDGVKSFAQQVFDFLILALGIIGIIEQRYTLAFLFYIFSIQALFSAYATRIIQFGAAVNLYQFCKDKLVTLFEDKVNDCNFKVSWKCPKVINLNNCSITLNQNLDLANLNLNLTNGMVISGENGSGKSTLLKILTGRGLSYQGQIKLDELDLKDFSASQLFHNVYYLTGQLTAYNDITDFGYSEALLNCKNPQVYQLLADTGIHNQIKLSSGQKQILQLFLLQNLKDKVILLDETLNAIATELKPRVYQLLIKPLTYNNFVLMVEHDLRFVNSEQDLINLSPYLQQT.

Positions 6-126 constitute a Peptidase C39 domain; it reads QEQPNECGIC…KQWTGYAATV (121 aa). Residue Cys-12 is part of the active site. 6 helical membrane-spanning segments follow: residues 150-170, 188-208, 265-285, 290-310, 379-399, and 402-422; these read LIIF…LLAT, IVVF…LYAL, HIPN…LIGI, FLWI…YDFF, SFAQ…GIIE, and YTLA…AYAT. An ABC transporter domain is found at 464–660; sequence INLNNCSITL…INLSPYLQQT (197 aa). An ATP-binding site is contributed by 494–501; that stretch reads GENGSGKS.

The protein belongs to the ABC transporter superfamily.

It localises to the cell membrane. The chain is Putative ABC transporter ATP-binding MG390 homolog from Mycoplasma pneumoniae (strain ATCC 29342 / M129 / Subtype 1) (Mycoplasmoides pneumoniae).